A 1150-amino-acid polypeptide reads, in one-letter code: DNA polymerase (1150 aa).

The tract at residues 1–53 is disordered; the sequence is MSLVQGHGTSGLFTEPPNPINQQESSGPSLPAQDAAQAFASSPRAGATSTIVN.

It belongs to the DNA polymerase type-B family. Heterodimer with the terminal protein; this heterodimer binds to bp 9 to 18 of the genome. Forms a complex with viral pTP, DBP and hosts NFIA and POU2F1/OCT1 for initiation of replication.

The protein localises to the host nucleus. It carries out the reaction DNA(n) + a 2'-deoxyribonucleoside 5'-triphosphate = DNA(n+1) + diphosphate. Eukaryotic-type DNA polymerase involved in viral genomic replication. DNA synthesis is protein primed, and acts in a strand displacement replication. Assembles in complex with viral pTP, DBP, host NFIA and host POU2F1/OCT1 on viral origin of replication. The polymerase covalently transfers dCMP onto pTP, thereby initiating complementary strand synthesis. The sequence is that of DNA polymerase from Canis lupus familiaris (Dog).